Reading from the N-terminus, the 238-residue chain is uncharacterized protein (238 aa).

Helical transmembrane passes span 6-26 (METLIRLFVSILIICVLALMI), 45-65 (FILLYFCGFKYLILLLSFFIL), 98-118 (IPILFAILAIFGFNWALIGYI), 160-180 (IFGTLAGVLGAFLIGLFGYLL), and 186-206 (IVLCGTAGGIAGNLADSLVGA).

It belongs to the TMEM19 family.

It localises to the cell membrane. This is an uncharacterized protein from Methanocaldococcus jannaschii (strain ATCC 43067 / DSM 2661 / JAL-1 / JCM 10045 / NBRC 100440) (Methanococcus jannaschii).